A 261-amino-acid chain; its full sequence is Phosphonates import ATP-binding protein PhnC (261 aa).

The region spanning 8 to 253 (LRVENLSKTY…WFRRIYGEGA (246 aa)) is the ABC transporter domain. ATP is bound at residue 41-48 (GLSGSGKS).

The protein belongs to the ABC transporter superfamily. Phosphonates importer (TC 3.A.1.9.1) family. In terms of assembly, the complex is composed of two ATP-binding proteins (PhnC), two transmembrane proteins (PhnE) and a solute-binding protein (PhnD).

It is found in the cell inner membrane. The catalysed reaction is phosphonate(out) + ATP + H2O = phosphonate(in) + ADP + phosphate + H(+). Part of the ABC transporter complex PhnCDE involved in phosphonates import. Responsible for energy coupling to the transport system. The chain is Phosphonates import ATP-binding protein PhnC from Bdellovibrio bacteriovorus (strain ATCC 15356 / DSM 50701 / NCIMB 9529 / HD100).